We begin with the raw amino-acid sequence, 395 residues long: Elongation factor Tu (395 aa).

In terms of domain architecture, tr-type G spans 10-204 (KSHVNIGTIG…AVDEYIPTPE (195 aa)). The tract at residues 19–26 (GHVDHGKT) is G1. 19-26 (GHVDHGKT) contacts GTP. Thr26 contacts Mg(2+). The tract at residues 60–64 (GITIN) is G2. The interval 81–84 (DCPG) is G3. Residues 81–85 (DCPGH) and 136–139 (NKMD) contribute to the GTP site. Positions 136 to 139 (NKMD) are G4. The G5 stretch occupies residues 174–176 (SAL).

This sequence belongs to the TRAFAC class translation factor GTPase superfamily. Classic translation factor GTPase family. EF-Tu/EF-1A subfamily. Monomer.

The protein localises to the cytoplasm. The enzyme catalyses GTP + H2O = GDP + phosphate + H(+). GTP hydrolase that promotes the GTP-dependent binding of aminoacyl-tRNA to the A-site of ribosomes during protein biosynthesis. In Enterococcus faecalis (strain ATCC 700802 / V583), this protein is Elongation factor Tu.